Reading from the N-terminus, the 490-residue chain is MTQGKKKKRAANRSIMLAKKIIIKDGGTPQGIGSPSVYHAVIVIFLEFFAWGLLTAPTLVVLHETFPKHTFLMNGLIQGVKGLLSFLSAPLIGALSDVWGRKSFLLLTVFFTCAPIPLMKISPWWYFAVISVSGVFAVTFSVVFAYVADITQEHERSMAYGLVSATFAASLVTSPAIGAYLGRVYGDSLVVVLATAIALLDICFILVAVPESLPEKMRPASWGAPISWEQADPFASLKKVGQDSIVLLICITVFLSYLPEAGQYSSFFLYLRQIMKFSPESVAAFIAVLGILSIIAQTIVLSLLMRSIGNKNTILLGLGFQILQLAWYGFGSEPWMMWAAGAVAAMSSITFPAVSALVSRTADADQQGVVQGMITGIRGLCNGLGPALYGFIFYIFHVELKELPITGTDLGTNTSPQHHFEQNSIIPGPPFLFGACSVLLALLVALFIPEHTNLSLRSSSWRKHCGSHSHPHSTQAPGEAKEPLLQDTNV.

Met-1 is subject to N-acetylmethionine. At 1 to 40 (MTQGKKKKRAANRSIMLAKKIIIKDGGTPQGIGSPSVYHA) the chain is on the extracellular side. Asn-12 is a glycosylation site (N-linked (GlcNAc...) asparagine). Residues 41–61 (VIVIFLEFFAWGLLTAPTLVV) traverse the membrane as a helical segment. Over 62 to 74 (LHETFPKHTFLMN) the chain is Cytoplasmic. Residues 75–95 (GLIQGVKGLLSFLSAPLIGAL) form a helical membrane-spanning segment. Residues 96 to 103 (SDVWGRKS) lie on the Extracellular side of the membrane. A helical transmembrane segment spans residues 104-124 (FLLLTVFFTCAPIPLMKISPW). At 125–126 (WY) the chain is on the cytoplasmic side. A helical transmembrane segment spans residues 127–147 (FAVISVSGVFAVTFSVVFAYV). At 148-160 (ADITQEHERSMAY) the chain is on the extracellular side. Residues 161-181 (GLVSATFAASLVTSPAIGAYL) form a helical membrane-spanning segment. Topologically, residues 182-188 (GRVYGDS) are cytoplasmic. The chain crosses the membrane as a helical span at residues 189–209 (LVVVLATAIALLDICFILVAV). At 210 to 243 (PESLPEKMRPASWGAPISWEQADPFASLKKVGQD) the chain is on the extracellular side. The chain crosses the membrane as a helical span at residues 244 to 264 (SIVLLICITVFLSYLPEAGQY). At 265-284 (SSFFLYLRQIMKFSPESVAA) the chain is on the cytoplasmic side. Residues 285 to 305 (FIAVLGILSIIAQTIVLSLLM) form a helical membrane-spanning segment. The Extracellular segment spans residues 306–313 (RSIGNKNT). Residues 314–334 (ILLGLGFQILQLAWYGFGSEP) form a helical membrane-spanning segment. Topologically, residues 335 to 337 (WMM) are cytoplasmic. A helical membrane pass occupies residues 338–358 (WAAGAVAAMSSITFPAVSALV). The Extracellular segment spans residues 359–379 (SRTADADQQGVVQGMITGIRG). A helical membrane pass occupies residues 380 to 400 (LCNGLGPALYGFIFYIFHVEL). The Cytoplasmic segment spans residues 401 to 427 (KELPITGTDLGTNTSPQHHFEQNSIIP). Residues 428–448 (GPPFLFGACSVLLALLVALFI) traverse the membrane as a helical segment. Topologically, residues 449–490 (PEHTNLSLRSSSWRKHCGSHSHPHSTQAPGEAKEPLLQDTNV) are extracellular. The N-linked (GlcNAc...) asparagine glycan is linked to Asn-453. The interval 466–490 (GSHSHPHSTQAPGEAKEPLLQDTNV) is disordered.

The protein belongs to the major facilitator superfamily. Expressed in various tissues.

The protein resides in the membrane. This Mus musculus (Mouse) protein is Hippocampus abundant transcript 1 protein.